An 891-amino-acid chain; its full sequence is uncharacterized protein (891 aa).

This is an uncharacterized protein from Ictalurid herpesvirus 1 (strain Auburn) (IcHV-1).